A 102-amino-acid chain; its full sequence is Small ribosomal subunit protein uS10 (102 aa).

The protein belongs to the universal ribosomal protein uS10 family. In terms of assembly, part of the 30S ribosomal subunit.

In terms of biological role, involved in the binding of tRNA to the ribosomes. This Treponema pallidum (strain Nichols) protein is Small ribosomal subunit protein uS10.